A 334-amino-acid polypeptide reads, in one-letter code: Magnesium-chelatase 38 kDa subunit (334 aa).

36–43 (GDRGTGKS) is a binding site for ATP.

It belongs to the Mg-chelatase subunits D/I family.

It carries out the reaction protoporphyrin IX + Mg(2+) + ATP + H2O = Mg-protoporphyrin IX + ADP + phosphate + 3 H(+). The protein operates within porphyrin-containing compound metabolism; bacteriochlorophyll biosynthesis. Involved in bacteriochlorophyll biosynthesis; introduces a magnesium ion into protoporphyrin IX to yield Mg-protoporphyrin IX. This chain is Magnesium-chelatase 38 kDa subunit (bchI), found in Cereibacter sphaeroides (strain ATCC 17023 / DSM 158 / JCM 6121 / CCUG 31486 / LMG 2827 / NBRC 12203 / NCIMB 8253 / ATH 2.4.1.) (Rhodobacter sphaeroides).